Consider the following 585-residue polypeptide: Switch-associated protein 70 (585 aa).

A PH domain is found at 210-306; it reads DVLKQGYMMK…WIQAIYSTIH (97 aa). The stretch at 316 to 529 forms a coiled coil; that stretch reads HKEARQRRKE…VKKKLEMATH (214 aa). Positions 347–373 are disordered; the sequence is ANENKQQELESVRKKLEEAASRAADEE. The span at 351 to 373 shows a compositional bias: basic and acidic residues; sequence KQQELESVRKKLEEAASRAADEE.

As to quaternary structure, the SWAP complex consists of NPM1, NCL, PARP1 and SWAP70. Tyrosine-phosphorylated. Spleen. Expressed only in B-cells that have been induced to switch to various Ig isotypes.

The protein localises to the cytoplasm. The protein resides in the cell membrane. Its subcellular location is the nucleus. It localises to the cell projection. It is found in the lamellipodium. The protein localises to the cytoskeleton. Its function is as follows. Phosphatidylinositol 3,4,5-trisphosphate-dependent guanine nucleotide exchange factor (GEF) which, independently of RAS, transduces signals from tyrosine kinase receptors to RAC. It also mediates signaling of membrane ruffling. Regulates the actin cytoskeleton as an effector or adapter protein in response to agonist stimulated phosphatidylinositol (3,4)-bisphosphate production and cell protrusion. The chain is Switch-associated protein 70 (Swap70) from Mus musculus (Mouse).